Reading from the N-terminus, the 719-residue chain is Calpain-12 (719 aa).

Residues 45-341 (LFRDPYFPAG…FDTVQICSLS (297 aa)) enclose the Calpain catalytic domain. Residues cysteine 105, histidine 259, and asparagine 283 contribute to the active site. The tract at residues 342 to 540 (PEVLGPSPEG…DDVISADLQS (199 aa)) is domain III. The segment covering 393 to 402 (DEEDDEDEEG) has biased composition (acidic residues). Residues 393-418 (DEEDDEDEEGPWGGWGAAGARGPARG) are disordered. Residues 541-719 (LQGPYLPLEL…RQWMEVATFS (179 aa)) are domain IV. The EF-hand domain maps to 620–655 (GYLLEWQAIFNKFDEDTSGTMNSYELRLALNAAGFH). Ca(2+) contacts are provided by aspartate 633, aspartate 635, serine 637, threonine 639, and glutamate 644.

This sequence belongs to the peptidase C2 family.

Calcium-regulated non-lysosomal thiol-protease. The protein is Calpain-12 (CAPN12) of Homo sapiens (Human).